Consider the following 71-residue polypeptide: Large ribosomal subunit protein bL31 (71 aa).

Belongs to the bacterial ribosomal protein bL31 family. Type A subfamily. Part of the 50S ribosomal subunit.

In terms of biological role, binds the 23S rRNA. This chain is Large ribosomal subunit protein bL31 (rpmE), found in Mycoplasmopsis synoviae (strain 53) (Mycoplasma synoviae).